Here is a 252-residue protein sequence, read N- to C-terminus: Triosephosphate isomerase (252 aa).

Residue 10 to 12 participates in substrate binding; that stretch reads NWK. The Electrophile role is filled by H96. E168 functions as the Proton acceptor in the catalytic mechanism. Substrate contacts are provided by residues G174, S214, and 235–236; that span reads GG.

It belongs to the triosephosphate isomerase family. Homodimer.

The protein localises to the cytoplasm. The enzyme catalyses D-glyceraldehyde 3-phosphate = dihydroxyacetone phosphate. It participates in carbohydrate biosynthesis; gluconeogenesis. It functions in the pathway carbohydrate degradation; glycolysis; D-glyceraldehyde 3-phosphate from glycerone phosphate: step 1/1. Functionally, involved in the gluconeogenesis. Catalyzes stereospecifically the conversion of dihydroxyacetone phosphate (DHAP) to D-glyceraldehyde-3-phosphate (G3P). The protein is Triosephosphate isomerase of Lactobacillus delbrueckii subsp. bulgaricus (strain ATCC 11842 / DSM 20081 / BCRC 10696 / JCM 1002 / NBRC 13953 / NCIMB 11778 / NCTC 12712 / WDCM 00102 / Lb 14).